The chain runs to 384 residues: Succinyl-diaminopimelate desuccinylase (384 aa).

Histidine 75 is a Zn(2+) binding site. Aspartate 77 is a catalytic residue. Aspartate 108 provides a ligand contact to Zn(2+). Glutamate 142 (proton acceptor) is an active-site residue. 3 residues coordinate Zn(2+): glutamate 143, glutamate 171, and histidine 357.

It belongs to the peptidase M20A family. DapE subfamily. Homodimer. Zn(2+) serves as cofactor. Requires Co(2+) as cofactor.

The enzyme catalyses N-succinyl-(2S,6S)-2,6-diaminopimelate + H2O = (2S,6S)-2,6-diaminopimelate + succinate. Its pathway is amino-acid biosynthesis; L-lysine biosynthesis via DAP pathway; LL-2,6-diaminopimelate from (S)-tetrahydrodipicolinate (succinylase route): step 3/3. Catalyzes the hydrolysis of N-succinyl-L,L-diaminopimelic acid (SDAP), forming succinate and LL-2,6-diaminopimelate (DAP), an intermediate involved in the bacterial biosynthesis of lysine and meso-diaminopimelic acid, an essential component of bacterial cell walls. This chain is Succinyl-diaminopimelate desuccinylase, found in Shewanella oneidensis (strain ATCC 700550 / JCM 31522 / CIP 106686 / LMG 19005 / NCIMB 14063 / MR-1).